A 750-amino-acid chain; its full sequence is Photosystem I P700 chlorophyll a apoprotein A1 (750 aa).

8 helical membrane passes run 70 to 93, 156 to 179, 195 to 219, 291 to 309, 346 to 369, 385 to 411, 433 to 455, and 531 to 549; these read VFSAHFGQLSIIFLWLSGMYFHGA, LYCTAIGALVFAALMLFAGWFHYH, LNHHLAGLLGLGSLSWAGHQVHVSL, IAHHHLAIAILFLIAGHMY, WHAQLSLNLAMLGSLTIVVAHHMY, LSLFTHHMWIGGFLIVGAAAHAAIFMV, AIISHLNWVCIFLGFHSFGLYIH, and FLVHHIHAFTIHVTVLILL. [4Fe-4S] cluster is bound by residues C573 and C582. The next 2 membrane-spanning stretches (helical) occupy residues 589 to 610 and 664 to 686; these read HVFLGLFWMYNAISVVIFHFSW and LSAYGLFFLGAHFVWAFSLMFLF. H675 is a chlorophyll a' binding site. Chlorophyll a-binding residues include M683 and Y691. Position 692 (W692) interacts with phylloquinone. The helical transmembrane segment at 724–744 threads the bilayer; that stretch reads AVGVTHYLLGGIATTWAFFLA.

It belongs to the PsaA/PsaB family. In terms of assembly, the PsaA/B heterodimer binds the P700 chlorophyll special pair and subsequent electron acceptors. PSI consists of a core antenna complex that captures photons, and an electron transfer chain that converts photonic excitation into a charge separation. The eukaryotic PSI reaction center is composed of at least 11 subunits. Requires P700 is a chlorophyll a/chlorophyll a' dimer, A0 is one or more chlorophyll a, A1 is one or both phylloquinones and FX is a shared 4Fe-4S iron-sulfur center. as cofactor.

The protein localises to the plastid. It localises to the chloroplast thylakoid membrane. The enzyme catalyses reduced [plastocyanin] + hnu + oxidized [2Fe-2S]-[ferredoxin] = oxidized [plastocyanin] + reduced [2Fe-2S]-[ferredoxin]. In terms of biological role, psaA and PsaB bind P700, the primary electron donor of photosystem I (PSI), as well as the electron acceptors A0, A1 and FX. PSI is a plastocyanin-ferredoxin oxidoreductase, converting photonic excitation into a charge separation, which transfers an electron from the donor P700 chlorophyll pair to the spectroscopically characterized acceptors A0, A1, FX, FA and FB in turn. Oxidized P700 is reduced on the lumenal side of the thylakoid membrane by plastocyanin. In Lobularia maritima (Sweet alyssum), this protein is Photosystem I P700 chlorophyll a apoprotein A1.